The sequence spans 470 residues: Siroheme synthase (470 aa).

The tract at residues 1–213 is precorrin-2 dehydrogenase /sirohydrochlorin ferrochelatase; it reads MSDATDPGWF…GEHAAARQVL (213 aa). Residues 28 to 29 and 49 to 50 contribute to the NAD(+) site; these read GI and PR. Positions 224 to 470 are uroporphyrinogen-III C-methyltransferase; that stretch reads GEVWLVGAGP…VVTPPPLSGT (247 aa). Proline 233 contributes to the S-adenosyl-L-methionine binding site. Aspartate 256 acts as the Proton acceptor in catalysis. Residue lysine 278 is the Proton donor of the active site. S-adenosyl-L-methionine contacts are provided by residues 309–311, isoleucine 314, 339–340, methionine 392, and glycine 421; these read GGD and TA.

This sequence in the N-terminal section; belongs to the precorrin-2 dehydrogenase / sirohydrochlorin ferrochelatase family. In the C-terminal section; belongs to the precorrin methyltransferase family.

The catalysed reaction is uroporphyrinogen III + 2 S-adenosyl-L-methionine = precorrin-2 + 2 S-adenosyl-L-homocysteine + H(+). It catalyses the reaction precorrin-2 + NAD(+) = sirohydrochlorin + NADH + 2 H(+). The enzyme catalyses siroheme + 2 H(+) = sirohydrochlorin + Fe(2+). It participates in cofactor biosynthesis; adenosylcobalamin biosynthesis; precorrin-2 from uroporphyrinogen III: step 1/1. The protein operates within cofactor biosynthesis; adenosylcobalamin biosynthesis; sirohydrochlorin from precorrin-2: step 1/1. Its pathway is porphyrin-containing compound metabolism; siroheme biosynthesis; precorrin-2 from uroporphyrinogen III: step 1/1. It functions in the pathway porphyrin-containing compound metabolism; siroheme biosynthesis; siroheme from sirohydrochlorin: step 1/1. It participates in porphyrin-containing compound metabolism; siroheme biosynthesis; sirohydrochlorin from precorrin-2: step 1/1. Multifunctional enzyme that catalyzes the SAM-dependent methylations of uroporphyrinogen III at position C-2 and C-7 to form precorrin-2 via precorrin-1. Then it catalyzes the NAD-dependent ring dehydrogenation of precorrin-2 to yield sirohydrochlorin. Finally, it catalyzes the ferrochelation of sirohydrochlorin to yield siroheme. This Gluconacetobacter diazotrophicus (strain ATCC 49037 / DSM 5601 / CCUG 37298 / CIP 103539 / LMG 7603 / PAl5) protein is Siroheme synthase.